The chain runs to 209 residues: Large ribosomal subunit protein uL3 (209 aa).

The protein belongs to the universal ribosomal protein uL3 family. As to quaternary structure, part of the 50S ribosomal subunit. Forms a cluster with proteins L14 and L19.

Its function is as follows. One of the primary rRNA binding proteins, it binds directly near the 3'-end of the 23S rRNA, where it nucleates assembly of the 50S subunit. The protein is Large ribosomal subunit protein uL3 of Clostridium tetani (strain Massachusetts / E88).